The primary structure comprises 347 residues: S-adenosylmethionine:tRNA ribosyltransferase-isomerase (347 aa).

Belongs to the QueA family. In terms of assembly, monomer.

It localises to the cytoplasm. It catalyses the reaction 7-aminomethyl-7-carbaguanosine(34) in tRNA + S-adenosyl-L-methionine = epoxyqueuosine(34) in tRNA + adenine + L-methionine + 2 H(+). Its pathway is tRNA modification; tRNA-queuosine biosynthesis. Transfers and isomerizes the ribose moiety from AdoMet to the 7-aminomethyl group of 7-deazaguanine (preQ1-tRNA) to give epoxyqueuosine (oQ-tRNA). The chain is S-adenosylmethionine:tRNA ribosyltransferase-isomerase from Treponema denticola (strain ATCC 35405 / DSM 14222 / CIP 103919 / JCM 8153 / KCTC 15104).